A 648-amino-acid chain; its full sequence is Threonine--tRNA ligase (648 aa).

Residues Met-1–Thr-63 form the TGS domain. The segment at Asp-247–Pro-544 is catalytic. Cys-344, His-395, and His-521 together coordinate Zn(2+).

The protein belongs to the class-II aminoacyl-tRNA synthetase family. As to quaternary structure, homodimer. Requires Zn(2+) as cofactor.

The protein localises to the cytoplasm. The catalysed reaction is tRNA(Thr) + L-threonine + ATP = L-threonyl-tRNA(Thr) + AMP + diphosphate + H(+). Functionally, catalyzes the attachment of threonine to tRNA(Thr) in a two-step reaction: L-threonine is first activated by ATP to form Thr-AMP and then transferred to the acceptor end of tRNA(Thr). Also edits incorrectly charged L-seryl-tRNA(Thr). The sequence is that of Threonine--tRNA ligase from Paracoccus denitrificans (strain Pd 1222).